The following is a 192-amino-acid chain: Outer-membrane lipoprotein LolB (192 aa).

Positions 1-17 are cleaved as a signal peptide; that stretch reads MTYRTLCILAFTALISA. Cys-18 carries N-palmitoyl cysteine lipidation. Cys-18 carries the S-diacylglycerol cysteine lipid modification.

The protein belongs to the LolB family. As to quaternary structure, monomer.

The protein resides in the cell outer membrane. Its function is as follows. Plays a critical role in the incorporation of lipoproteins in the outer membrane after they are released by the LolA protein. In Marinomonas sp. (strain MWYL1), this protein is Outer-membrane lipoprotein LolB.